A 306-amino-acid chain; its full sequence is Agmatinase (306 aa).

The Mn(2+) site is built by histidine 126, aspartate 149, histidine 151, aspartate 153, aspartate 230, and aspartate 232.

This sequence belongs to the arginase family. Agmatinase subfamily. Mn(2+) is required as a cofactor.

It carries out the reaction agmatine + H2O = urea + putrescine. It participates in amine and polyamine biosynthesis; putrescine biosynthesis via agmatine pathway; putrescine from agmatine: step 1/1. In terms of biological role, catalyzes the formation of putrescine from agmatine. The sequence is that of Agmatinase from Escherichia coli O9:H4 (strain HS).